The following is a 102-amino-acid chain: Cytochrome c-553 (102 aa).

Residues 1–23 (MKRILVVMSICAALAFGVSAAMA) form the signal peptide. Heme c-binding residues include Cys33, Cys36, His37, and Met80.

In terms of processing, binds 1 heme c group covalently per subunit.

The protein localises to the periplasm. In terms of biological role, natural electron acceptor for a formate dehydrogenase. This chain is Cytochrome c-553, found in Nitratidesulfovibrio vulgaris (strain DSM 19637 / Miyazaki F) (Desulfovibrio vulgaris).